A 156-amino-acid chain; its full sequence is MKLYILAVGHKMPGWIASGFDEYTKRMPPELRIELREIKPELRSGGRSAESVMAAERQKIEAALPKGARIVALDERGRDWTTMQLAQALPGWQQDGRDVAFVIGGADGLDPELKARADLLLRISSMTLPHGMVRVLLAEQLYRAWSITQNHPYHRA.

S-adenosyl-L-methionine contacts are provided by residues Leu-73, Gly-104, and 123–128 (ISSMTL).

This sequence belongs to the RNA methyltransferase RlmH family. Homodimer.

Its subcellular location is the cytoplasm. It carries out the reaction pseudouridine(1915) in 23S rRNA + S-adenosyl-L-methionine = N(3)-methylpseudouridine(1915) in 23S rRNA + S-adenosyl-L-homocysteine + H(+). Functionally, specifically methylates the pseudouridine at position 1915 (m3Psi1915) in 23S rRNA. The protein is Ribosomal RNA large subunit methyltransferase H of Burkholderia vietnamiensis (strain G4 / LMG 22486) (Burkholderia cepacia (strain R1808)).